We begin with the raw amino-acid sequence, 190 residues long: Photosynthetic NDH subunit of lumenal location 2, chloroplastic (190 aa).

The N-terminal 31 residues, 1–31 (MSSFTTTNTPPPYLLRKIYHRRVNQPFSVVC), are a transit peptide targeting the chloroplast. Residues 32-68 (CTGEPQQDIFTRRRTLTSLITFTVIGGATSSALAQEK) constitute a thylakoid transit peptide. Coiled coils occupy residues 87–107 (EDAA…REML) and 139–159 (ESRR…MSEL).

The protein belongs to the PsbQ family. As to quaternary structure, part of the chloroplast NDH complex, composed of a mixture of chloroplast and nucleus encoded subunits. Component of the NDH lumenal subcomplex, at least composed of PnsL1, PnsL2, PnsL3, PnsL4 and PnsL5.

Its subcellular location is the plastid. It localises to the chloroplast thylakoid membrane. Functionally, NDH shuttles electrons from NAD(P)H:plastoquinone, via FMN and iron-sulfur (Fe-S) centers, to quinones in the photosynthetic chain and possibly in a chloroplast respiratory chain. The immediate electron acceptor for the enzyme in this species is believed to be plastoquinone. Couples the redox reaction to proton translocation, and thus conserves the redox energy in a proton gradient. Required for both formation and activity of the chloroplast NAD(P)H dehydrogenase (NDH) complex. The chain is Photosynthetic NDH subunit of lumenal location 2, chloroplastic from Arabidopsis thaliana (Mouse-ear cress).